We begin with the raw amino-acid sequence, 901 residues long: Core protein VP3 (901 aa).

The protein belongs to the orbivirus VP3 family.

It localises to the virion. Its function is as follows. The VP3 protein is one of the five proteins (with VP1, VP4, VP6 and VP7) which form the inner capsid of the virus. In Bluetongue virus 10 (isolate USA) (BTV 10), this protein is Core protein VP3 (Segment-3).